The primary structure comprises 931 residues: Protocadherin gamma-B2 (931 aa).

Residues 1 to 30 form the signal peptide; that stretch reads MKASSGRCGLVRWLQVLLPFLLSLFPGALP. Cadherin domains follow at residues 31–133, 134–242, 243–347, 348–452, 453–562, and 570–675; these read VQIR…TPLF, KQTK…PPVF, SQDV…APEV, IVTS…APVF, QQTS…APRV, and DGSA…LPDL. The Extracellular portion of the chain corresponds to 31–691; sequence VQIRYSIPEE…SDPQAELQFY (661 aa). 2 N-linked (GlcNAc...) asparagine glycosylation sites follow: asparagine 419 and asparagine 545. A helical membrane pass occupies residues 692-712; it reads LVVALALISVLFFLAVILAIS. Residues 713 to 931 lie on the Cytoplasmic side of the membrane; the sequence is LRLRRSSRSD…KKKSGKKEKK (219 aa). Disordered regions lie at residues 814-840 and 901-931; these read DWRF…WPNN and ATLT…KEKK. Over residues 815-840 the composition is skewed to polar residues; the sequence is WRFSQAQRPGTSGSQNGDDTGTWPNN. A compositionally biased stretch (basic residues) spans 921 to 931; that stretch reads NKKKSGKKEKK.

It is found in the cell membrane. In terms of biological role, potential calcium-dependent cell-adhesion protein. May be involved in the establishment and maintenance of specific neuronal connections in the brain. This chain is Protocadherin gamma-B2 (PCDHGB2), found in Pan troglodytes (Chimpanzee).